We begin with the raw amino-acid sequence, 190 residues long: GTP cyclohydrolase 1 (190 aa).

3 residues coordinate Zn(2+): C80, H83, and C151.

This sequence belongs to the GTP cyclohydrolase I family. As to quaternary structure, toroid-shaped homodecamer, composed of two pentamers of five dimers.

It catalyses the reaction GTP + H2O = 7,8-dihydroneopterin 3'-triphosphate + formate + H(+). Its pathway is cofactor biosynthesis; 7,8-dihydroneopterin triphosphate biosynthesis; 7,8-dihydroneopterin triphosphate from GTP: step 1/1. The protein is GTP cyclohydrolase 1 of Rickettsia typhi (strain ATCC VR-144 / Wilmington).